Here is a 468-residue protein sequence, read N- to C-terminus: 3-isopropylmalate dehydratase large subunit 2 (468 aa).

Cysteine 349, cysteine 409, and cysteine 412 together coordinate [4Fe-4S] cluster.

Belongs to the aconitase/IPM isomerase family. LeuC type 1 subfamily. As to quaternary structure, heterodimer of LeuC and LeuD. It depends on [4Fe-4S] cluster as a cofactor.

It carries out the reaction (2R,3S)-3-isopropylmalate = (2S)-2-isopropylmalate. It functions in the pathway amino-acid biosynthesis; L-leucine biosynthesis; L-leucine from 3-methyl-2-oxobutanoate: step 2/4. Functionally, catalyzes the isomerization between 2-isopropylmalate and 3-isopropylmalate, via the formation of 2-isopropylmaleate. The protein is 3-isopropylmalate dehydratase large subunit 2 of Bradyrhizobium diazoefficiens (strain JCM 10833 / BCRC 13528 / IAM 13628 / NBRC 14792 / USDA 110).